Here is a 152-residue protein sequence, read N- to C-terminus: Methylglyoxal synthase (152 aa).

An MGS-like domain is found at 6 to 152; it reads RKISARKSIA…YDGYLAERLA (147 aa). Substrate contacts are provided by residues H19, K23, 45-48, and 65-66; these read TGTT and SG. D71 acts as the Proton donor/acceptor in catalysis. Substrate is bound at residue H98.

Belongs to the methylglyoxal synthase family.

It catalyses the reaction dihydroxyacetone phosphate = methylglyoxal + phosphate. Its function is as follows. Catalyzes the formation of methylglyoxal from dihydroxyacetone phosphate. The protein is Methylglyoxal synthase of Actinobacillus pleuropneumoniae serotype 3 (strain JL03).